Here is a 367-residue protein sequence, read N- to C-terminus: Succinyl-diaminopimelate desuccinylase (367 aa).

A Zn(2+)-binding site is contributed by H67. D69 is an active-site residue. Residue D98 participates in Zn(2+) binding. The Proton acceptor role is filled by E128. Positions 129, 157, and 342 each coordinate Zn(2+).

It belongs to the peptidase M20A family. DapE subfamily. In terms of assembly, homodimer. It depends on Zn(2+) as a cofactor. Co(2+) serves as cofactor.

It carries out the reaction N-succinyl-(2S,6S)-2,6-diaminopimelate + H2O = (2S,6S)-2,6-diaminopimelate + succinate. The protein operates within amino-acid biosynthesis; L-lysine biosynthesis via DAP pathway; LL-2,6-diaminopimelate from (S)-tetrahydrodipicolinate (succinylase route): step 3/3. Its function is as follows. Catalyzes the hydrolysis of N-succinyl-L,L-diaminopimelic acid (SDAP), forming succinate and LL-2,6-diaminopimelate (DAP), an intermediate involved in the bacterial biosynthesis of lysine and meso-diaminopimelic acid, an essential component of bacterial cell walls. The chain is Succinyl-diaminopimelate desuccinylase from Campylobacter hominis (strain ATCC BAA-381 / DSM 21671 / CCUG 45161 / LMG 19568 / NCTC 13146 / CH001A).